The sequence spans 202 residues: Nucleoside triphosphate pyrophosphatase (202 aa).

The active-site Proton acceptor is the D79.

The protein belongs to the Maf family. A divalent metal cation is required as a cofactor.

It is found in the cytoplasm. It catalyses the reaction a ribonucleoside 5'-triphosphate + H2O = a ribonucleoside 5'-phosphate + diphosphate + H(+). It carries out the reaction a 2'-deoxyribonucleoside 5'-triphosphate + H2O = a 2'-deoxyribonucleoside 5'-phosphate + diphosphate + H(+). In terms of biological role, nucleoside triphosphate pyrophosphatase. May have a dual role in cell division arrest and in preventing the incorporation of modified nucleotides into cellular nucleic acids. The sequence is that of Nucleoside triphosphate pyrophosphatase from Rhodospirillum rubrum (strain ATCC 11170 / ATH 1.1.1 / DSM 467 / LMG 4362 / NCIMB 8255 / S1).